The primary structure comprises 258 residues: MMRVKAKKALGQHFLRDLSIAERIADTLSEHKALPVLEIGPGMGVLTQFLLRKGHDVRVIEIDGESVSYLREEFPELSDRIIEGDFLHYPLSELFPGGRQYCLIGNYPYNISSQIFFRLLDVREQIPCCSGMLQREVAMRLASPPGKKDYGILSVLLQLWYNIEYLFTVDASVFDPPPKVQSGVIRLTRNDRKELPCSEKALKTVVKTAFGQRRKTLRNSLRGILPAGFDRFDEPVFSKRPEQLSPDDFIALTLLLQQ.

The S-adenosyl-L-methionine site is built by His-13, Leu-15, Gly-40, Glu-61, Asp-85, and Asn-106.

It belongs to the class I-like SAM-binding methyltransferase superfamily. rRNA adenine N(6)-methyltransferase family. RsmA subfamily.

Its subcellular location is the cytoplasm. It catalyses the reaction adenosine(1518)/adenosine(1519) in 16S rRNA + 4 S-adenosyl-L-methionine = N(6)-dimethyladenosine(1518)/N(6)-dimethyladenosine(1519) in 16S rRNA + 4 S-adenosyl-L-homocysteine + 4 H(+). Functionally, specifically dimethylates two adjacent adenosines (A1518 and A1519) in the loop of a conserved hairpin near the 3'-end of 16S rRNA in the 30S particle. May play a critical role in biogenesis of 30S subunits. The chain is Ribosomal RNA small subunit methyltransferase A from Porphyromonas gingivalis (strain ATCC 33277 / DSM 20709 / CIP 103683 / JCM 12257 / NCTC 11834 / 2561).